The chain runs to 344 residues: Melanocyte-stimulating hormone receptor (344 aa).

Topologically, residues 1 to 37 (MPMQGAQRKLLGSLNSTPTATSNPGLAANHTGAPCLE) are extracellular. Asparagine 29 carries N-linked (GlcNAc...) asparagine glycosylation. Residues 38-63 (VSIPDGLFLSLGLVSLVENVLVVAAI) form a helical membrane-spanning segment. At 64-72 (AKNRNLHSS) the chain is on the cytoplasmic side. The chain crosses the membrane as a helical span at residues 73–93 (MYXFICCLALSDLLVSGSNML). Topologically, residues 94 to 118 (ETAIILLLEAGTLATRASVVQQLHN) are extracellular. Residues 119-140 (TIDVLTCSSMLCSLCFLGAIAV) traverse the membrane as a helical segment. Over 141–163 (DRYISIFYALRYHSIMTLPRAQR) the chain is Cytoplasmic. Residues 164 to 183 (AIAAIWVASVLSSTLFITYY) traverse the membrane as a helical segment. The Extracellular portion of the chain corresponds to 184–191 (DHAAVLLC). Residues 192–211 (LVVFFLAMLVLMAVLYVHML) form a helical membrane-spanning segment. Residues 212 to 240 (ARACQHAQGIIRLHNRQLPAHKGFGLRGA) lie on the Cytoplasmic side of the membrane. A helical transmembrane segment spans residues 241 to 266 (ATLTILLGIFFLCWGPFFLHLTLVVF). Topologically, residues 267-279 (CPQHLTCNCIFKN) are extracellular. A helical membrane pass occupies residues 280–300 (FKVFLTLIICNTIIDPLIYAF). Topologically, residues 301–344 (RSQELRRTLKEVLLCSSWPGCWAEGGGDSVWPGSCVTLRGPLPP) are cytoplasmic. A lipid anchor (S-palmitoyl cysteine) is attached at cysteine 315.

Belongs to the G-protein coupled receptor 1 family. As to quaternary structure, interacts with MGRN1, but does not undergo MGRN1-mediated ubiquitination; this interaction competes with GNAS-binding and thus inhibits agonist-induced cAMP production. Interacts with OPN3; the interaction results in a decrease in MC1R-mediated cAMP signaling and ultimately a decrease in melanin production in melanocytes.

It is found in the cell membrane. Functionally, receptor for MSH (alpha, beta and gamma) and ACTH. The activity of this receptor is mediated by G proteins which activate adenylate cyclase. Mediates melanogenesis, the production of eumelanin (black/brown) and phaeomelanin (red/yellow), via regulation of cAMP signaling in melanocytes. This chain is Melanocyte-stimulating hormone receptor (MC1R), found in Callithrix geoffroyi (Geoffroy's marmoset).